The sequence spans 219 residues: Cytidylate kinase (219 aa).

An ATP-binding site is contributed by 9-17; it reads GPAGSGKTT.

It belongs to the cytidylate kinase family. Type 1 subfamily.

The protein resides in the cytoplasm. The catalysed reaction is CMP + ATP = CDP + ADP. It carries out the reaction dCMP + ATP = dCDP + ADP. The polypeptide is Cytidylate kinase (Fervidobacterium nodosum (strain ATCC 35602 / DSM 5306 / Rt17-B1)).